Consider the following 316-residue polypeptide: 4-hydroxy-3-methylbut-2-enyl diphosphate reductase (316 aa).

C12 contributes to the [4Fe-4S] cluster binding site. (2E)-4-hydroxy-3-methylbut-2-enyl diphosphate contacts are provided by H41 and H74. Dimethylallyl diphosphate is bound by residues H41 and H74. 2 residues coordinate isopentenyl diphosphate: H41 and H74. C96 contacts [4Fe-4S] cluster. (2E)-4-hydroxy-3-methylbut-2-enyl diphosphate is bound at residue H124. H124 is a binding site for dimethylallyl diphosphate. H124 provides a ligand contact to isopentenyl diphosphate. The Proton donor role is filled by E126. T167 is a binding site for (2E)-4-hydroxy-3-methylbut-2-enyl diphosphate. C197 lines the [4Fe-4S] cluster pocket. (2E)-4-hydroxy-3-methylbut-2-enyl diphosphate contacts are provided by S225, S226, N227, and S269. Residues S225, S226, N227, and S269 each coordinate dimethylallyl diphosphate. Residues S225, S226, N227, and S269 each coordinate isopentenyl diphosphate.

This sequence belongs to the IspH family. As to quaternary structure, homodimer. Requires [4Fe-4S] cluster as cofactor.

The catalysed reaction is isopentenyl diphosphate + 2 oxidized [2Fe-2S]-[ferredoxin] + H2O = (2E)-4-hydroxy-3-methylbut-2-enyl diphosphate + 2 reduced [2Fe-2S]-[ferredoxin] + 2 H(+). The enzyme catalyses dimethylallyl diphosphate + 2 oxidized [2Fe-2S]-[ferredoxin] + H2O = (2E)-4-hydroxy-3-methylbut-2-enyl diphosphate + 2 reduced [2Fe-2S]-[ferredoxin] + 2 H(+). It functions in the pathway isoprenoid biosynthesis; dimethylallyl diphosphate biosynthesis; dimethylallyl diphosphate from (2E)-4-hydroxy-3-methylbutenyl diphosphate: step 1/1. The protein operates within isoprenoid biosynthesis; isopentenyl diphosphate biosynthesis via DXP pathway; isopentenyl diphosphate from 1-deoxy-D-xylulose 5-phosphate: step 6/6. Its function is as follows. Catalyzes the conversion of 1-hydroxy-2-methyl-2-(E)-butenyl 4-diphosphate (HMBPP) into a mixture of isopentenyl diphosphate (IPP) and dimethylallyl diphosphate (DMAPP). Acts in the terminal step of the DOXP/MEP pathway for isoprenoid precursor biosynthesis. In Salmonella typhi, this protein is 4-hydroxy-3-methylbut-2-enyl diphosphate reductase.